A 384-amino-acid chain; its full sequence is S-adenosylmethionine synthase (384 aa).

Residue His15 coordinates ATP. Asp17 provides a ligand contact to Mg(2+). Glu43 serves as a coordination point for K(+). Residues Glu56 and Gln99 each contribute to the L-methionine site. A flexible loop region spans residues 99–109 (QSADINQGVDR). ATP contacts are provided by residues 164–166 (DAK), 230–231 (RF), Asp239, 245–246 (RK), Ala262, and Lys266. Asp239 lines the L-methionine pocket. Position 270 (Lys270) interacts with L-methionine.

This sequence belongs to the AdoMet synthase family. As to quaternary structure, homotetramer; dimer of dimers. Mg(2+) serves as cofactor. The cofactor is K(+).

The protein resides in the cytoplasm. The enzyme catalyses L-methionine + ATP + H2O = S-adenosyl-L-methionine + phosphate + diphosphate. The protein operates within amino-acid biosynthesis; S-adenosyl-L-methionine biosynthesis; S-adenosyl-L-methionine from L-methionine: step 1/1. Its function is as follows. Catalyzes the formation of S-adenosylmethionine (AdoMet) from methionine and ATP. The overall synthetic reaction is composed of two sequential steps, AdoMet formation and the subsequent tripolyphosphate hydrolysis which occurs prior to release of AdoMet from the enzyme. This chain is S-adenosylmethionine synthase, found in Haemophilus influenzae (strain PittGG).